The chain runs to 280 residues: Putative pyruvate, phosphate dikinase regulatory protein (280 aa).

Position 158-165 (glycine 158–threonine 165) interacts with ADP.

This sequence belongs to the pyruvate, phosphate/water dikinase regulatory protein family. PDRP subfamily.

It carries out the reaction N(tele)-phospho-L-histidyl/L-threonyl-[pyruvate, phosphate dikinase] + ADP = N(tele)-phospho-L-histidyl/O-phospho-L-threonyl-[pyruvate, phosphate dikinase] + AMP + H(+). The catalysed reaction is N(tele)-phospho-L-histidyl/O-phospho-L-threonyl-[pyruvate, phosphate dikinase] + phosphate + H(+) = N(tele)-phospho-L-histidyl/L-threonyl-[pyruvate, phosphate dikinase] + diphosphate. In terms of biological role, bifunctional serine/threonine kinase and phosphorylase involved in the regulation of the pyruvate, phosphate dikinase (PPDK) by catalyzing its phosphorylation/dephosphorylation. The chain is Putative pyruvate, phosphate dikinase regulatory protein from Lactobacillus gasseri (strain ATCC 33323 / DSM 20243 / BCRC 14619 / CIP 102991 / JCM 1131 / KCTC 3163 / NCIMB 11718 / NCTC 13722 / AM63).